Reading from the N-terminus, the 288-residue chain is 30 kDa spicule matrix protein (288 aa).

Positions methionine 1–alanine 20 are cleaved as a signal peptide. One can recognise a C-type lectin domain in the interval alanine 93–proline 163. The N-linked (GlcNAc...) asparagine glycan is linked to asparagine 103.

As to expression, spines and tube feet.

In terms of biological role, matrix protein of the sea urchin embryo spicule. The function of the matrix proteins is to direct crystal growth in certain orientations and inhibit growth in others. In Hemicentrotus pulcherrimus (Sea urchin), this protein is 30 kDa spicule matrix protein (SM30).